A 479-amino-acid chain; its full sequence is MNRMRWVGEGDIWDLDMSTPVTLEGTARAVPDDPLPLGLSRGTRLSRPKQVEFFHRFMASPLIPSFSPIRPNTGDGGGGGFSLQRVLTLPFSNNWLVSLLGQFDVQRFVTEIDKTKAFGRGSSSTVASRLNTIGKHLKDKSLYALGFCSEFLLSPDDTLLLSYDAYKGDLDKNPRAKAIFNHEFPLHNLTAEAVWPGLFVDKHGEYWDVPLSMAIDLASLPAESGPSYHLCLHHNSGSPKKLHSDTMEVPPPSLLPGLSLKSAVSYRTNMDLWRGTTPKLETCKPYDVFLSSPHVAVSGIIGSVMTAAFGENSIRSKFENDSEGVGGFSLHFPSVNSGFMADALGRASLTAQYGNFQKFFFDLTRFHARLDFPHGLRFLTGATSVAQDLLNSRQPSLEAFQKICPEVLVSLQQQIVGPFSFKVESGIEIDLRNGANPVTVDKTVFAIEYALQVLLSAKAVVSYSPKQNEFMVELRFFET.

A transmembrane span lies at residues 288–310 (VFLSSPHVAVSGIIGSVMTAAFG).

Homodimer. Forms dimeric beta-barrel. Interacts with TGD5.

It localises to the plastid. The protein resides in the chloroplast outer membrane. The protein localises to the endoplasmic reticulum. Its function is as follows. Involved in lipid transfer from the endoplasmic reticulum (ER) to plastids. Specifically binds phosphatidic acid (PtdOH). This is Protein TRIGALACTOSYLDIACYLGLYCEROL 4, chloroplastic from Arabidopsis thaliana (Mouse-ear cress).